The primary structure comprises 206 residues: Isochorismatase domain-containing protein 2A (206 aa).

K26 carries the N6-succinyllysine modification. 2 positions are modified to N6-acetyllysine; alternate: K93 and K178. 2 positions are modified to N6-succinyllysine; alternate: K93 and K178. Residues K182 and K185 each carry the N6-acetyllysine modification.

Belongs to the isochorismatase family. As to quaternary structure, interacts with CDKN2A. As to expression, ubiquitous. Expressed predominantly in uterus, stomach and urinary tract.

It localises to the cytoplasm. It is found in the nucleus. The polypeptide is Isochorismatase domain-containing protein 2A (Mus musculus (Mouse)).